We begin with the raw amino-acid sequence, 359 residues long: Holliday junction branch migration complex subunit RuvB (359 aa).

Residues methionine 1 to asparagine 10 are compositionally biased toward basic and acidic residues. The tract at residues methionine 1 to aspartate 20 is disordered. The segment at histidine 4–tyrosine 188 is large ATPase domain (RuvB-L). ATP is bound by residues leucine 27, arginine 28, glycine 69, lysine 72, threonine 73, threonine 74, glutamate 135 to phenylalanine 137, arginine 178, tyrosine 188, and arginine 225. Residue threonine 73 coordinates Mg(2+). The small ATPAse domain (RuvB-S) stretch occupies residues threonine 189 to glutamate 259. The head domain (RuvB-H) stretch occupies residues serine 262 to glutamate 359. 3 residues coordinate DNA: arginine 298, arginine 317, and arginine 322.

It belongs to the RuvB family. Homohexamer. Forms an RuvA(8)-RuvB(12)-Holliday junction (HJ) complex. HJ DNA is sandwiched between 2 RuvA tetramers; dsDNA enters through RuvA and exits via RuvB. An RuvB hexamer assembles on each DNA strand where it exits the tetramer. Each RuvB hexamer is contacted by two RuvA subunits (via domain III) on 2 adjacent RuvB subunits; this complex drives branch migration. In the full resolvosome a probable DNA-RuvA(4)-RuvB(12)-RuvC(2) complex forms which resolves the HJ.

Its subcellular location is the cytoplasm. The catalysed reaction is ATP + H2O = ADP + phosphate + H(+). Functionally, the RuvA-RuvB-RuvC complex processes Holliday junction (HJ) DNA during genetic recombination and DNA repair, while the RuvA-RuvB complex plays an important role in the rescue of blocked DNA replication forks via replication fork reversal (RFR). RuvA specifically binds to HJ cruciform DNA, conferring on it an open structure. The RuvB hexamer acts as an ATP-dependent pump, pulling dsDNA into and through the RuvAB complex. RuvB forms 2 homohexamers on either side of HJ DNA bound by 1 or 2 RuvA tetramers; 4 subunits per hexamer contact DNA at a time. Coordinated motions by a converter formed by DNA-disengaged RuvB subunits stimulates ATP hydrolysis and nucleotide exchange. Immobilization of the converter enables RuvB to convert the ATP-contained energy into a lever motion, pulling 2 nucleotides of DNA out of the RuvA tetramer per ATP hydrolyzed, thus driving DNA branch migration. The RuvB motors rotate together with the DNA substrate, which together with the progressing nucleotide cycle form the mechanistic basis for DNA recombination by continuous HJ branch migration. Branch migration allows RuvC to scan DNA until it finds its consensus sequence, where it cleaves and resolves cruciform DNA. This chain is Holliday junction branch migration complex subunit RuvB, found in Granulibacter bethesdensis (strain ATCC BAA-1260 / CGDNIH1).